The primary structure comprises 202 residues: MTDNELGIELNEPLVSVEEYLAAGVHIGTQQKDNDMKDFIYRVRSDGLYIIDIRKTDERIKQVAKFLARYEPAKIFVVTSRQYGQYPAQKFADTIGALSHVGRFIPGTLTNPKLPKYVEPSVVIVTDPIGDAQVITEAVQCGMPVIALCDINNRTNNVDLVIPTNNKGRKALSMVYFLLTKEFLRQKGIVSAMTVEDFESEF.

Belongs to the universal ribosomal protein uS2 family.

This chain is Small ribosomal subunit protein uS2, found in Methanocorpusculum labreanum (strain ATCC 43576 / DSM 4855 / Z).